The primary structure comprises 233 residues: Large ribosomal subunit protein uL1 (233 aa).

Belongs to the universal ribosomal protein uL1 family. In terms of assembly, part of the 50S ribosomal subunit.

Binds directly to 23S rRNA. The L1 stalk is quite mobile in the ribosome, and is involved in E site tRNA release. In terms of biological role, protein L1 is also a translational repressor protein, it controls the translation of the L11 operon by binding to its mRNA. The protein is Large ribosomal subunit protein uL1 of Pseudoalteromonas atlantica (strain T6c / ATCC BAA-1087).